Reading from the N-terminus, the 930-residue chain is MTKIDLINLLDHAADTVAASGILIYSPGNVESPHRLTYAELRDAAQQNARRLGCMEGFAPGSLVLLHLDGYRDNMIWLWSLIYAGCIPVMSTPFAHHEEHRRSHLLHLQSLLRDPICLTRQGLEAQFPPDVGFRLCNIESISGGSNPFTSPRLGQPPGQDDNVDDIALLMLTSGSTGHAKAVPLTHSQLLSALAGKERFLQLRQHGPSLNWVAFDHIASLAEMHFHPIFACIDQVHVAAADVITDPLILLELIHRHRVGITFAPNFLLAKLLDSLEREPSPSSRPWDLSCLMHLLSGGEANVVDTCARLARRLTQDYGVPSTCIKPAFGMTETCAGCSFNDRFPTYETVHMLDFASLGRGVKGVQMRVTSLSTGQPVDDHSEVGNLELSGPSVFRGYYNNSQATRDSFTPDGWFRTGDLAMIDAGGQLVLRGRSKELICINGAKYLPHEVESAIEDAKVRGVTPGFTICFGYRPAKAQTESLAVVYLPAYEEADVESRSQAQNAIIRVGLIMTGTRPYVLPLDAHTLVKSSLGKISRNKIKTGLESGAFQAFEETNNRLLKLRQSTPVVPAGNETETLLLAAALHVFRVTADEFGVETPMFAFGITSLDMIAWKRQAETILGHEIPMLAIITSPTIRVLARQLQDGHHGPGEYNPVVTLQPHGSKTPLWLIHPIGGEVLVFVSLAGLFADDRPVHALRARGLNRGEPPFGSIHEAADAYYQAIKRVQPHGPYAVAGYSYGSLVAFEVAKRLDQHGKDEVPFFGSLDLPPFHAQIISKSDWTESLLHLASSLSLIAEEEINTLGADLRGLPQPRAIQKILARAPPRRIRELDLSPDGLMRWTKLTSAMAQATRGYVPVGQTRSVDVFYTEPSGALATTRDEWLDRHREWRQFGRLETQFHPLEGLHYRLMDEDNVHKVYRVLSRAMDARGL.

The tract at residues 31–440 (ESPHRLTYAE…RGRSKELICI (410 aa)) is adenylation (A) domain. A Carrier domain is found at 570 to 647 (PAGNETETLL…VLARQLQDGH (78 aa)). Position 607 is an O-(pantetheine 4'-phosphoryl)serine (Ser607). Positions 667 to 920 (PLWLIHPIGG…EDNVHKVYRV (254 aa)) are thioesterase (TE) domain.

This sequence belongs to the NRP synthetase family.

It catalyses the reaction 2 3-(4-hydroxyphenyl)pyruvate + H(+) = (2S)-2-(4-hydoxybenzyl)-3-(4-hydroxyphenyl)-2-furonol carboxylate + H2O. It participates in secondary metabolite biosynthesis. Nonribosomal peptide synthetase; part of the gene cluster that mediates the biosynthesis of butyrolactones, natural products that show a wide range of biological activities such as antitumor, antiparasitic or anti-inflammatory activity. The nonribosomal peptide synthetase btyA is responsible for the production of butyrolactone II, the core structure of butyrolactones. BtyA first activates 4-hydroxyphenylpyruvate (HPPA) through its A domain to AMP-HPPA. The HPPA unit is then loaded to the T domain and eventually transferred to the TE domain. Upon loading of another HPPA unit to the T domain, the TE domain promotes the enolate formation on the unit attached. Then aldol condensation establishes the carbon-carbon bond between the two units, followed by ester cyclization, and keto-enol tautomerization to yield the gamma-butyrolactone core. Hydrolysis, and finally esterification of the exposed carboxylic acid group yields butyrolactone II. Two additional enzymes, a prenyltransferase and an epoxidase, may be involved in the tailoring modifications of butyrolactone II to give butyrolactone III and butyrolactone I. The chain is Nonribosomal peptide synthetase btyA from Aspergillus terreus (strain NIH 2624 / FGSC A1156).